Reading from the N-terminus, the 607-residue chain is Matrix metalloproteinase-16 (607 aa).

Residues 1 to 31 (MILLAFSSGRRLDFVHRSGVFFLQTLLWILC) form the signal peptide. Positions 32–119 (ATVCGTEQYF…SSKFNIRRKR (88 aa)) are excised as a propeptide. N83 carries an N-linked (GlcNAc...) asparagine glycan. Positions 99-106 (PRCGVPDQ) match the Cysteine switch motif. C101 contacts Zn(2+). At 120–564 (YALTGQKWQH…LDNTASTVKA (445 aa)) the chain is on the extracellular side. Position 183 (D183) interacts with Ca(2+). H193 and D195 together coordinate Zn(2+). D200, G201, G203, and F205 together coordinate Ca(2+). Residue H208 participates in Zn(2+) binding. Ca(2+) is bound by residues G215, G217, and D219. H221 contacts Zn(2+). Positions 223 and 226 each coordinate Ca(2+). H246 is a binding site for Zn(2+). E247 is an active-site residue. H250 and H256 together coordinate Zn(2+). A disordered region spans residues 281–340 (DDLQGIQKIYGPPDKIPPPTRPLPTVPPHRSVPPADPRRHDRPKPPRPPTGRPSYPGAKP). Residues 294 to 315 (DKIPPPTRPLPTVPPHRSVPPA) are compositionally biased toward pro residues. Hemopexin repeat units follow at residues 340–388 (PNIC…WRGL), 389–434 (PPSI…GNGI), 436–484 (PHGI…KGIP), and 485–532 (ESPQ…FMGC). C343 and C532 are oxidised to a cystine. Residues 565 to 585 (IAIVIPCILALCLLVLVYTVF) traverse the membrane as a helical segment. The Cytoplasmic portion of the chain corresponds to 586-607 (QFKRKGTPRHILYCKRSMQEWV).

This sequence belongs to the peptidase M10A family. In terms of assembly, interacts with CSPG4 through CSPG4 chondroitin sulfate glycosaminoglycan. The cofactor is Zn(2+). It depends on Ca(2+) as a cofactor. Post-translationally, the precursor is cleaved by a furin endopeptidase.

Its subcellular location is the cell membrane. Its function is as follows. Endopeptidase that degrades various components of the extracellular matrix, such as collagen type III and fibronectin. Activates progelatinase A. Involved in the matrix remodeling of blood vessels. It has no effect on type I, II, IV and V collagen. However, upon interaction with CSPG4, it may be involved in degradation and invasion of type I collagen by melanoma cells. The polypeptide is Matrix metalloproteinase-16 (Mmp16) (Mus musculus (Mouse)).